The chain runs to 335 residues: Methionine import ATP-binding protein MetN (335 aa).

The region spanning 2–241 (IEFQRLHKSY…PKHVTTRRFV (240 aa)) is the ABC transporter domain. 38–45 (GHSGAGKS) contributes to the ATP binding site.

The protein belongs to the ABC transporter superfamily. Methionine importer (TC 3.A.1.24) family. In terms of assembly, the complex is composed of two ATP-binding proteins (MetN), two transmembrane proteins (MetI) and a solute-binding protein (MetQ).

The protein resides in the cell inner membrane. The catalysed reaction is L-methionine(out) + ATP + H2O = L-methionine(in) + ADP + phosphate + H(+). It catalyses the reaction D-methionine(out) + ATP + H2O = D-methionine(in) + ADP + phosphate + H(+). Part of the ABC transporter complex MetNIQ involved in methionine import. Responsible for energy coupling to the transport system. In Xanthomonas oryzae pv. oryzae (strain MAFF 311018), this protein is Methionine import ATP-binding protein MetN.